Here is a 243-residue protein sequence, read N- to C-terminus: VQ motif-containing protein 33 (243 aa).

Positions 1-16 are enriched in polar residues; the sequence is MEVSTSSMSSKPEQMQ. A disordered region spans residues 1–49; it reads MEVSTSSMSSKPEQMQNPPPMISSPRFQPQIISPHHHDQHQHLSNPYPT. Positions 59-68 match the VQ motif; it reads FKQVVQMLTG. Disordered stretches follow at residues 69-98 and 138-162; these read SSTD…SIPP and FTGG…SENI. A phosphoserine mark is found at serine 83 and serine 95. Polar residues predominate over residues 84 to 98; sequence PVNNNNKGSSFSIPP. Threonine 139 is subject to Phosphothreonine. Serine 148, serine 152, serine 165, serine 167, and serine 178 each carry phosphoserine. Positions 149–162 are enriched in low complexity; it reads PRFSPRNSSSSENI. The disordered stretch occupies residues 180–243; the sequence is VTPLRSNDDP…FPVASPARNS (64 aa). Threonine 181 is modified (phosphothreonine). The segment covering 191-201 has biased composition (polar residues); sequence NKSSPLSLGNS. A phosphoserine mark is found at serine 218 and serine 221. A Phosphothreonine modification is found at threonine 222. Serine 238 is subject to Phosphoserine.

In terms of processing, phosphorylated on serine and threonine residues by MPK6.

Its subcellular location is the nucleus. Its function is as follows. May modulate WRKY transcription factor activities. The polypeptide is VQ motif-containing protein 33 (Arabidopsis thaliana (Mouse-ear cress)).